A 79-amino-acid chain; its full sequence is Large ribosomal subunit protein uL29 (79 aa).

It belongs to the universal ribosomal protein uL29 family.

The protein is Large ribosomal subunit protein uL29 of Gluconacetobacter diazotrophicus (strain ATCC 49037 / DSM 5601 / CCUG 37298 / CIP 103539 / LMG 7603 / PAl5).